Here is a 37-residue protein sequence, read N- to C-terminus: Cytochrome b6-f complex subunit 5 (37 aa).

Residues 5 to 25 (LLSGIVLGLIPITLAGLFVTA) traverse the membrane as a helical segment.

This sequence belongs to the PetG family. The 4 large subunits of the cytochrome b6-f complex are cytochrome b6, subunit IV (17 kDa polypeptide, PetD), cytochrome f and the Rieske protein, while the 4 small subunits are PetG, PetL, PetM and PetN. The complex functions as a dimer.

It is found in the plastid. The protein resides in the chloroplast thylakoid membrane. Component of the cytochrome b6-f complex, which mediates electron transfer between photosystem II (PSII) and photosystem I (PSI), cyclic electron flow around PSI, and state transitions. PetG is required for either the stability or assembly of the cytochrome b6-f complex. The protein is Cytochrome b6-f complex subunit 5 of Chara vulgaris (Common stonewort).